Reading from the N-terminus, the 149-residue chain is Extracellular protease inhibitor 1 (149 aa).

Positions 1–16 (MKSALLFTLVVAAVHA) are cleaved as a signal peptide. 2 Kazal-like domains span residues 29–86 (ESNE…SSTG) and 88–141 (QPPS…ACVG). 2 disulfides stabilise this stretch: Cys-35–Cys-65 and Cys-39–Cys-58. Asn-67 carries N-linked (GlcNAc...) asparagine glycosylation. Cystine bridges form between Cys-94/Cys-124, Cys-98/Cys-117, and Cys-106/Cys-139.

As to quaternary structure, interacts with host subtilisin-like protease P69B.

Its subcellular location is the secreted. Its function is as follows. Secreted effector that interacts with and inhibits the pathogenesis-related P69B subtilisin-like serine protease of host tomato. Inhibition of host proteases by a pathogen extracellular protease inhibitor forms a specific type of defense-counterdefense mechanism between plants and microbial pathogens. The sequence is that of Extracellular protease inhibitor 1 from Phytophthora infestans (Potato late blight agent).